The following is a 695-amino-acid chain: MASYKGLIVDVNGRSHENNLAHRTREIDRERLIVRRGQPFSITLQCSDSLPPKHHLELVLHLGKRDEVVIKVQKEHGARDKWWFNQQGAQDEILLTLHSPANAVIGHYRLAVLVMSPDGHIVERADKISFHMLFNPWCRDDMVYLPDESKLQEYVMNEDGVIYMGTWDYIRSIPWNYGQFEDYVMDICFEVLDNSPAALKNSEMDIEHRSDPVYVGRTITAMVNSNGDRGVLTGRWEEPYTDGVAPYRWTGSVPILQQWSKAGVRPVKYGQCWVFAAVACTVLRCLGIPTRPITNFASAHDVDGNLSVDFLLNERLESLDSRQRSDSSWNFHCWVESWMSREDLPEGNDGWQVLDPTPQELSDGEFCCGPCPVAAIKEGNLGVKYDAPFVFAEVNADTIYWIVQKDGQRRKITEDHASVGKNISTKSVYGNHREDVTLHYKYPEGSQKEREVYKKAGRRVTEPSNEIAEQGRLQLSIKHAQPVFGTDFDVIVEVKNEGGRDAHAQLTMLAMAVTYNSLRRGECQRKTISVTVPAHKAHKEVMRLHYDDYVRCVSEHHLIRVKALLDAPGENGPIMTVANIPLSTPELLVQVPGKAVVWEPLTAYVSFTNPLPVPLKGGVFTLEGAGLLSATQIHVNGAVAPSGKVSVKLSFSPMRTGVRKLLVDFDSDRLKDVKGVTTVVVHKKYRSLITGLHTD.

Residues Cys272, His332, and Asp355 contribute to the active site. Positions 395, 397, 434, 444, and 449 each coordinate Ca(2+). GTP contacts are provided by residues 476-482 (SIKHAQP) and 578-581 (ANIP).

Belongs to the transglutaminase superfamily. Transglutaminase family. In terms of assembly, monomer. Ca(2+) is required as a cofactor.

The protein resides in the cytoplasm. Its subcellular location is the cytosol. It is found in the nucleus. The protein localises to the chromosome. It localises to the secreted. The protein resides in the extracellular space. Its subcellular location is the extracellular matrix. It is found in the cell membrane. The protein localises to the mitochondrion. It catalyses the reaction L-glutaminyl-[protein] + L-lysyl-[protein] = [protein]-L-lysyl-N(6)-5-L-glutamyl-[protein] + NH4(+). The enzyme catalyses L-glutaminyl-[protein] + serotonin = 5-serotonyl-L-glutamyl-[protein] + NH4(+). It carries out the reaction L-glutaminyl-[protein] + dopamine = 5-dopaminyl-L-glutamyl-[protein] + NH4(+). The catalysed reaction is L-glutaminyl-[protein] + histamine = 5-histaminyl-L-glutamyl-[protein] + NH4(+). It catalyses the reaction L-glutaminyl-[protein] + (R)-noradrenaline = 5-(R)-noradrenalinyl-L-glutamyl-[protein] + NH4(+). The enzyme catalyses L-glutaminyl-[protein] + H2O = L-glutamyl-[protein] + NH4(+). With respect to regulation, acyltransferase activity is regulated by the binding of GTP and Ca(2+): inactivated by GTP, which stabilizes its closed structure, thereby obstructing the accessibility of substrates to the active sites. In contrast, Ca(2+) acts as a cofactor by inducing conformational change to the active open form. In absence of Ca(2+), Mg(2+) may bind Ca(2+)-binding sites, promoting GTP-binding and subsequent inhibition of the acyltransferase activity. Its function is as follows. Calcium-dependent acyltransferase that catalyzes the formation of covalent bonds between peptide-bound glutamine and various primary amines, such as gamma-amino group of peptide-bound lysine, or mono- and polyamines, thereby producing cross-linked or aminated proteins, respectively. Involved in many biological processes, such as bone development, angiogenesis, wound healing, cellular differentiation, chromatin modification and apoptosis. Acts as a protein-glutamine gamma-glutamyltransferase by mediating the cross-linking of proteins: under physiological conditions, the protein cross-linking activity is inhibited by GTP; inhibition is relieved by Ca(2+) in response to various stresses. When secreted, catalyzes cross-linking of proteins of the extracellular matrix, resulting in the formation of scaffolds. Plays a key role during apoptosis, both by (1) promoting the cross-linking of cytoskeletal proteins resulting in condensation of the cytoplasm, and by (2) mediating cross-linking proteins of the extracellular matrix, resulting in the irreversible formation of scaffolds that stabilize the integrity of the dying cells before their clearance by phagocytosis, thereby preventing the leakage of harmful intracellular components. In addition to protein cross-linking, can use different monoamine substrates to catalyze a vast array of protein post-translational modifications: mediates aminylation of serotonin, dopamine, noradrenaline or histamine into glutamine residues of target proteins to generate protein serotonylation, dopaminylation, noradrenalinylation or histaminylation, respectively. Mediates protein serotonylation of small GTPases during activation and aggregation of platelets, leading to constitutive activation of these GTPases. Plays a key role in chromatin organization by mediating serotonylation and dopaminylation of histone H3. Catalyzes serotonylation of 'Gln-5' of histone H3 (H3Q5ser) during serotonergic neuron differentiation, thereby facilitating transcription. Acts as a mediator of neurotransmission-independent role of nuclear dopamine in ventral tegmental area (VTA) neurons: catalyzes dopaminylation of 'Gln-5' of histone H3 (H3Q5dop), thereby regulating relapse-related transcriptional plasticity in the reward system. Also acts as a protein deamidase by mediating the side chain deamidation of specific glutamine residues of proteins to glutamate. May also act as an isopeptidase cleaving the previously formed cross-links. Also able to participate in signaling pathways independently of its acyltransferase activity: acts as a signal transducer in alpha-1 adrenergic receptor-mediated stimulation of phospholipase C-delta (PLCD) activity and is required for coupling alpha-1 adrenergic agonists to the stimulation of phosphoinositide lipid metabolism. This chain is Protein-glutamine gamma-glutamyltransferase 2, found in Pagrus major (Red sea bream).